The following is a 588-amino-acid chain: L-fucose isomerase (588 aa).

Active-site proton acceptor residues include glutamate 335 and aspartate 359. Mn(2+) is bound by residues glutamate 335, aspartate 359, and histidine 525.

The protein belongs to the L-fucose isomerase family. Mn(2+) is required as a cofactor.

The protein localises to the cytoplasm. It catalyses the reaction L-fucose = L-fuculose. Its pathway is carbohydrate degradation; L-fucose degradation; L-lactaldehyde and glycerone phosphate from L-fucose: step 1/3. Functionally, converts the aldose L-fucose into the corresponding ketose L-fuculose. The chain is L-fucose isomerase from Streptococcus pneumoniae (strain P1031).